The sequence spans 159 residues: MPANKKEGLIFGVMMCFGMVCVMSIYNAIINRAIYDFSLMTVFEMVIGFMIALLLDLLLVGPLAKKIAFRMPFDKTKKIYVILAMSTCMVIGMVLCMSVFGLVTAVLANGLNGDSLFSAYLMIVLKNFILAYPLQLLIMGPLVRGVFMKFVKPKLTAAI.

This is an uncharacterized protein from Bacillus subtilis (strain 168).